Reading from the N-terminus, the 1051-residue chain is Anucleate primary sterigmata protein B (1051 aa).

Coiled-coil stretches lie at residues 10-200 and 239-285; these read IDRL…YAIA and STLV…ELKL. Positions 58 to 90 are enriched in basic and acidic residues; it reads KDNQGLKRKIRDLEKQLKDQQSDKESMLNHDPE. 2 disordered regions span residues 58 to 100 and 141 to 160; these read KDNQ…DRDH and LKSL…REER. Basic and acidic residues predominate over residues 294–303; sequence AGDSILDRSA. 4 disordered regions span residues 294–329, 877–902, 909–928, and 984–1051; these read AGDS…AERE, NHPR…LAER, NTAA…QMTN, and EERD…DIEV. Residues 309–321 show a composition bias toward polar residues; the sequence is RPSSSISDRTGQS. 2 coiled-coil regions span residues 325 to 743 and 787 to 878; these read DAER…RNSM and RNLL…LQNH. Polar residues-rich tracts occupy residues 877–897 and 916–928; these read NHPR…SSTI and ARSS…QMTN. Residues 950–1004 adopt a coiled-coil conformation; the sequence is NQEVWIKRLHELERRLKAEREARLLDRNGARRRLEERDAENKRLRAQLDRQRLRQ. Composition is skewed to basic and acidic residues over residues 984–1001 and 1028–1040; these read EERD…DRQR and EGYR…HSSS.

Its subcellular location is the cytoplasm. In terms of biological role, involved in regulation of nuclear migration. May be involved in regulating nuclear positioning. This chain is Anucleate primary sterigmata protein B (apsB), found in Emericella nidulans (strain FGSC A4 / ATCC 38163 / CBS 112.46 / NRRL 194 / M139) (Aspergillus nidulans).